The primary structure comprises 468 residues: Protein translocase subunit SecY (468 aa).

Over 1–20 the chain is Cytoplasmic; the sequence is MGARDVIYAMEKWFPEVERP. The helical transmembrane segment at 21–47 threads the bilayer; sequence KKHVPLKEKFVWTGLALVLYYVLAEIP. The Extracellular portion of the chain corresponds to 48–58; the sequence is VYGIPKKIQDY. Residues 59 to 66 constitute an intramembrane region (helical); it reads FQFLRVVL. The chain crosses the membrane as a discontinuously helical span at residues 59–87; sequence FQFLRVVLAGRNGSILTLGIGPIVTAGII. Residues 67 to 78 lie within the membrane without spanning it; sequence AGRNGSILTLGI. An intramembrane region (helical) is located at residues 79–87; the sequence is GPIVTAGII. Residues 88 to 108 lie on the Cytoplasmic side of the membrane; that stretch reads LQLLVGSELIRLDLANPEDRR. A helical membrane pass occupies residues 109–133; that stretch reads FYQALQRVFSVFMCFFEAAIWVLGG. Residues 134–144 are Extracellular-facing; sequence AFGRVGVDVTY. A helical membrane pass occupies residues 145 to 169; that stretch reads TIATLMIIQLALGGIILIVLDELVS. Over 170 to 175 the chain is Cytoplasmic; sequence KWGIGS. Residues 176–194 form a helical membrane-spanning segment; that stretch reads GISLFIAAGVSQRILTRSL. Topologically, residues 195-239 are extracellular; it reads NPLTDPNIIDPLTGKPAIVGAIPYFIQHILDGDLKGALYRGGSAP. A helical membrane pass occupies residues 240–261; the sequence is DMIAVTATIIVFLVVVYFESMR. Topologically, residues 262–285 are cytoplasmic; the sequence is VEIPLGYRGVTIRGRYPIKFLYVS. Residues 286-307 traverse the membrane as a helical segment; the sequence is NIPIILTFALYANIQLWARVLD. The Extracellular portion of the chain corresponds to 308 to 346; it reads RFGHPWLGRFDPVTGNPIGGFVLYVIPPRNIFTVIDNPV. The chain crosses the membrane as a helical span at residues 347 to 366; sequence RAIIYLILTIIFSLLFGFLW. Topologically, residues 367–409 are cytoplasmic; that stretch reads VELTGLDARTIARQLQRAGLQIPGFRRDPRTLERVLQKYIPYV. A helical membrane pass occupies residues 410–428; the sequence is TFWGSLTVALISVLADFLG. Topologically, residues 429 to 431 are extracellular; it reads ALG. The helical transmembrane segment at 432–446 threads the bilayer; sequence TGTGILLTVGILYRF. Topologically, residues 447-468 are cytoplasmic; the sequence is YEEIAREQITEMFPALRRLFKG.

Belongs to the SecY/SEC61-alpha family. Component of the Sec protein translocase complex. Heterotrimer consisting of alpha (SecY), beta (SecG) and gamma (SecE) subunits. The heterotrimers can form oligomers, although 1 heterotrimer is thought to be able to translocate proteins. Interacts with the ribosome. May interact with SecDF, and other proteins may be involved.

The protein resides in the cell membrane. The central subunit of the protein translocation channel SecYEG. Consists of two halves formed by TMs 1-5 and 6-10. These two domains form a lateral gate at the front which open onto the bilayer between TMs 2 and 7, and are clamped together by SecE at the back. The channel is closed by both a pore ring composed of hydrophobic SecY resides and a short helix (helix 2A) on the extracellular side of the membrane which forms a plug. The plug probably moves laterally to allow the channel to open. The ring and the pore may move independently. The sequence is that of Protein translocase subunit SecY from Pyrococcus horikoshii (strain ATCC 700860 / DSM 12428 / JCM 9974 / NBRC 100139 / OT-3).